The sequence spans 242 residues: Orotidine 5'-phosphate decarboxylase (242 aa).

Residues Asp22, Lys44, 71 to 80, Thr130, Arg190, Gln199, Gly219, and Arg220 contribute to the substrate site; that span reads DLKYHDIPNT. Catalysis depends on Lys73, which acts as the Proton donor.

Belongs to the OMP decarboxylase family. Type 1 subfamily. As to quaternary structure, homodimer.

The catalysed reaction is orotidine 5'-phosphate + H(+) = UMP + CO2. It participates in pyrimidine metabolism; UMP biosynthesis via de novo pathway; UMP from orotate: step 2/2. In terms of biological role, catalyzes the decarboxylation of orotidine 5'-monophosphate (OMP) to uridine 5'-monophosphate (UMP). The polypeptide is Orotidine 5'-phosphate decarboxylase (Laribacter hongkongensis (strain HLHK9)).